The chain runs to 144 residues: Protein cornichon homolog 1 (144 aa).

At 1 to 10 the chain is on the cytoplasmic side; the sequence is MAFTFAAFCY. A helical membrane pass occupies residues 11 to 31; sequence MLALLLTATLIFFAIWHIIAF. The Lumenal portion of the chain corresponds to 32-56; the sequence is DELKTDYKNPIDQCNTLNPLVLPEY. The helical transmembrane segment at 57 to 77 threads the bilayer; that stretch reads LIHAFFCVMFLCAAEWLTLGL. Residues 78–122 are Cytoplasmic-facing; it reads NMPLLAYHIWRYMSRPVMSGPGLYDPTTIMNADILAYCQKEGWCK. Residues 123–143 form a helical membrane-spanning segment; the sequence is LAFYLLAFFYYLYGMIYVLVS. Residue S144 is a topological domain, lumenal.

The protein belongs to the cornichon family. As to quaternary structure, interacts with AREG immature precursor and with immature TGFA, i.e. with a prosegment and lacking full N-glycosylation, but not with the fully N-glycosylated form. In the Golgi apparatus, may form a complex with GORASP55 and transmembrane TGFA.

It is found in the endoplasmic reticulum membrane. It localises to the golgi apparatus membrane. Involved in the selective transport and maturation of TGF-alpha family proteins. This chain is Protein cornichon homolog 1 (CNIH1), found in Pongo abelii (Sumatran orangutan).